Reading from the N-terminus, the 90-residue chain is Small ribosomal subunit protein uS15c (90 aa).

It belongs to the universal ribosomal protein uS15 family. As to quaternary structure, part of the 30S ribosomal subunit.

The protein localises to the plastid. Its subcellular location is the chloroplast. In Oryza nivara (Indian wild rice), this protein is Small ribosomal subunit protein uS15c (rps15-A).